The chain runs to 315 residues: Calcium homeostasis modulator protein 4 (315 aa).

Residues 1–14 lie on the Cytoplasmic side of the membrane; sequence MSPDLNCISSSLLR. A helical membrane pass occupies residues 15–37; the sequence is SEPCINSLIAILTVCGQQLFSSY. At 38 to 48 the chain is on the extracellular side; sequence TFSCPCQVGKN. Cystine bridges form between C41-C132 and C43-C163. A helical transmembrane segment spans residues 49–71; it reads FYYGSAFLVVPALILLIAGYALR. The Cytoplasmic portion of the chain corresponds to 72–104; the sequence is GQMWTVASEYCCCSCTPPYRRSSPLERRLACLM. Residues 105 to 130 form a helical membrane-spanning segment; sequence FFDITGRALVAPLTWLTVTLLTGTYY. At 131–184 the chain is on the extracellular side; it reads ECAASEFASVDQYPMFANVTPSKREEMLAGFPCYTSAPSDVIPIRDEVALLHRY. The helical transmembrane segment at 185-208 threads the bilayer; the sequence is QSQMLGWILVVLATIALLLSKCLA. Topologically, residues 209–315 are cytoplasmic; sequence RCCSPLTSLQ…DRQEGIEMKP (107 aa).

It belongs to the CALHM family. In terms of assembly, oligomerizes to form decameric and undecameric channels. Two hemichannels can assemble in a tail-to-tail manner to form a gap junction.

Its subcellular location is the cell membrane. Functionally, may assemble to form gap junction channel-like structures involved in intercellular communication. Channel gating and ion conductance are likely regulated by membrane lipids rather than by membrane depolarization or extracellular calcium levels. The polypeptide is Calcium homeostasis modulator protein 4 (Mus musculus (Mouse)).